A 334-amino-acid chain; its full sequence is Glycerol-3-phosphate dehydrogenase [NAD(P)+] (334 aa).

NADPH-binding residues include Trp13, Arg33, and Lys106. Sn-glycerol 3-phosphate is bound by residues Lys106, Gly137, and Ser139. Ala141 is a binding site for NADPH. Sn-glycerol 3-phosphate-binding residues include Lys192, Asp245, Ser255, Arg256, and Asn257. Catalysis depends on Lys192, which acts as the Proton acceptor. Arg256 provides a ligand contact to NADPH. NADPH contacts are provided by Val280 and Glu282.

This sequence belongs to the NAD-dependent glycerol-3-phosphate dehydrogenase family.

The protein localises to the cytoplasm. The catalysed reaction is sn-glycerol 3-phosphate + NAD(+) = dihydroxyacetone phosphate + NADH + H(+). It carries out the reaction sn-glycerol 3-phosphate + NADP(+) = dihydroxyacetone phosphate + NADPH + H(+). It functions in the pathway membrane lipid metabolism; glycerophospholipid metabolism. Catalyzes the reduction of the glycolytic intermediate dihydroxyacetone phosphate (DHAP) to sn-glycerol 3-phosphate (G3P), the key precursor for phospholipid synthesis. The sequence is that of Glycerol-3-phosphate dehydrogenase [NAD(P)+] from Chlamydia abortus (strain DSM 27085 / S26/3) (Chlamydophila abortus).